The sequence spans 219 residues: MEPSFWHEKWQLQQIGFHQNQVNPFLVKYWSHIGLNENTEVFVPLCGKSLDMFYLAEQRHTVLGCELNTLAVEQFFTDNGLTYQVNHTDEHVVFSTDQVTLYQGDIFTLPKSATASISGFYDRAALIAWPEEMRQQYVKALAALIPANVSGLLITLDYLQETLKGPPFAVSPRWVESYLTPYFDVELLECVDVLADNPRFMNKHVPWLNEAVYKLTRKS.

Residues Trp-10, Leu-45, Glu-66, and Arg-123 each contribute to the S-adenosyl-L-methionine site.

It belongs to the class I-like SAM-binding methyltransferase superfamily. TPMT family.

It is found in the cytoplasm. It carries out the reaction S-adenosyl-L-methionine + a thiopurine = S-adenosyl-L-homocysteine + a thiopurine S-methylether.. This is Thiopurine S-methyltransferase from Shewanella frigidimarina (strain NCIMB 400).